Consider the following 423-residue polypeptide: Glutamate-1-semialdehyde 2,1-aminomutase (423 aa).

K266 bears the N6-(pyridoxal phosphate)lysine mark.

Belongs to the class-III pyridoxal-phosphate-dependent aminotransferase family. HemL subfamily. In terms of assembly, homodimer. It depends on pyridoxal 5'-phosphate as a cofactor.

The protein localises to the cytoplasm. It catalyses the reaction (S)-4-amino-5-oxopentanoate = 5-aminolevulinate. It participates in porphyrin-containing compound metabolism; protoporphyrin-IX biosynthesis; 5-aminolevulinate from L-glutamyl-tRNA(Glu): step 2/2. The polypeptide is Glutamate-1-semialdehyde 2,1-aminomutase (Desulfovibrio desulfuricans (strain ATCC 27774 / DSM 6949 / MB)).